Reading from the N-terminus, the 793-residue chain is Toll-like receptor 2 type-1 (793 aa).

The first 25 residues, 1 to 25 (MFNQSKQKPTMKLMWQAWLIYTALA), serve as a signal peptide directing secretion. Over 26 to 597 (AHLPEEQALR…QLSLMECHRS (572 aa)) the chain is Extracellular. Cysteines 41 and 47 form a disulfide. Asn-48 carries an N-linked (GlcNAc...) asparagine glycan. LRR repeat units follow at residues 64-85 (KITV…DLQK), 88-109 (NLRT…SFGS), 112-133 (KLEL…WFGP), 136-157 (SLQH…SPFS), 161-182 (NLSS…NFEG), and 185-206 (FLNT…SLKS). Asn-120 is a glycosylation site (N-linked (GlcNAc...) asparagine). Asn-161, Asn-195, Asn-254, and Asn-325 each carry an N-linked (GlcNAc...) asparagine glycan. A disulfide bridge connects residues Cys-362 and Cys-391. LRR repeat units lie at residues 370 to 391 (SLLY…ETIC), 397 to 418 (SLQT…ARYI), 423 to 444 (KLIN…CEWP), 446 to 467 (NLKY…IPST), 468 to 486 (LEVL…LQLP), 487 to 508 (FLKE…TDIP), and 509 to 530 (NLVA…EFES). Asn-402 carries an N-linked (GlcNAc...) asparagine glycan. A disulfide bridge links Cys-441 with Cys-463. Asn-451 is a glycosylation site (N-linked (GlcNAc...) asparagine). Residues 542–596 (NNFICSCEFLSFIHHEAGIAQVLVGWPESYICDSPLTVRGAQVGSVQLSLMECHR) form the LRRCT domain. Residues 598–618 (LLVSLICTLVFLFILILVVVG) traverse the membrane as a helical segment. The Cytoplasmic portion of the chain corresponds to 619 to 793 (YKYHAVWYMR…WENLKAALKS (175 aa)). In terms of domain architecture, TIR spans 648–791 (ICYDAFVSYS…MFWENLKAAL (144 aa)).

The protein belongs to the Toll-like receptor family. In terms of assembly, binds MYD88 (via TIR domain). N-glycosylated. TLR2-1 is more heavily glycosylated than TLR2-2. Highly expressed in ovary. Detected at lower levels in heart, lung, gizzard and testis.

The protein resides in the membrane. Functionally, participates in the innate immune response to microbial agents. Acts via MYD88 and TRAF6, leading to NF-kappa-B activation, cytokine secretion and the inflammatory response. Does not respond to LPS and responds with less ability than TLR2-2 to mycoplasmal macrophage-activating lipopeptide-2kD (MALP-2). The protein is Toll-like receptor 2 type-1 (TLR2-1) of Gallus gallus (Chicken).